The sequence spans 362 residues: MSRPIRAFINCAALRHNLAVVRRHVHQARIMAVVKADAYGHGLLRVARALDAVDGFAVLELEAAIQLREAGFSQLILLLEGFFSIEEIEAINHYRLSTVIHCHEQLSMLLAHKKTGKPDIFLKINTGMNRLGFRPEEGNSVLNRLRQWHTDISITLMTHFACADDLLEADHVDQQLGSFARLEEKREGCIPRTLANSAAILRYPGTHADWVRPGIILYGASPLPDKTGIELGLQPVMTLTSRIIAVQHLDFSDRLGYGGQFVADQPMRVGVVAAGYADGYPRHAPTGTPVLVNGRRTRLIGRVSMDMLTVDLSGINEAGAGSLVTLWGEGLPVEEVARSAQTISYELLAALSPRVQTVSSIP.

Residue Lys35 is the Proton acceptor; specific for D-alanine of the active site. At Lys35 the chain carries N6-(pyridoxal phosphate)lysine. Arg130 contributes to the substrate binding site. Catalysis depends on Tyr257, which acts as the Proton acceptor; specific for L-alanine. Residue Met305 coordinates substrate.

This sequence belongs to the alanine racemase family. Requires pyridoxal 5'-phosphate as cofactor.

The enzyme catalyses L-alanine = D-alanine. The protein operates within amino-acid biosynthesis; D-alanine biosynthesis; D-alanine from L-alanine: step 1/1. Functionally, catalyzes the interconversion of L-alanine and D-alanine. May also act on other amino acids. This is Alanine racemase (alr) from Nitrosomonas europaea (strain ATCC 19718 / CIP 103999 / KCTC 2705 / NBRC 14298).